A 294-amino-acid polypeptide reads, in one-letter code: Protein RarD (294 aa).

Topologically, residues 1–11 are cytoplasmic; the sequence is MDAKQTRQGVL. The chain crosses the membrane as a helical span at residues 12–34; sequence LALAAYFIWGIAPAYFKLIYYVP. One can recognise an EamA domain in the interval 18-145; sequence FIWGIAPAYF…AVCGVLVQLW (128 aa). Topologically, residues 35-37 are periplasmic; the sequence is ADE. Residues 38-60 traverse the membrane as a helical segment; it reads ILTHRVIWSFFFMVALLSVSRQW. Residues 61-72 lie on the Cytoplasmic side of the membrane; sequence RQVKRLLKTPKK. A helical transmembrane segment spans residues 73–95; the sequence is IFLLALSAVLVGGNWLLFIWAVN. Residues 96–99 are Periplasmic-facing; it reads NHHM. The helical transmembrane segment at 100 to 122 threads the bilayer; sequence LEASLGYFINPLVNILLGMIFLG. At 123 to 128 the chain is on the cytoplasmic side; sequence ERFRRM. Residues 129–146 form a helical membrane-spanning segment; sequence QWLAVILAVCGVLVQLWT. The Periplasmic portion of the chain corresponds to 147–149; it reads FGS. The helical transmembrane segment at 150–167 threads the bilayer; that stretch reads LPIIALGLAFSFAFYGLV. Over 168-179 the chain is Cytoplasmic; it reads RKKIAVEAQTGM. The chain crosses the membrane as a helical span at residues 180–197; the sequence is LVETLWLLPVAAIYLFSI. At 198–211 the chain is on the periplasmic side; the sequence is ADSATSHMGQNALS. The helical transmembrane segment at 212-234 threads the bilayer; the sequence is LNLLLMAAGVVTTIPLLCFTGAA. Residues 235–238 lie on the Cytoplasmic side of the membrane; that stretch reads TRLR. Residues 239–261 traverse the membrane as a helical segment; sequence LSTLGFFQYIGPTLMFLLAVTFY. The Periplasmic segment spans residues 262 to 270; it reads GEVPGADKM. Residues 271–290 form a helical membrane-spanning segment; sequence VTFAFIWVALAIFVMDAIYT. The Cytoplasmic segment spans residues 291 to 294; it reads QRKK.

The protein belongs to the EamA transporter family.

The protein resides in the cell inner membrane. In Salmonella typhi, this protein is Protein RarD (rarD).